A 130-amino-acid chain; its full sequence is Small ribosomal subunit protein uS11 (130 aa).

This sequence belongs to the universal ribosomal protein uS11 family. As to quaternary structure, part of the 30S ribosomal subunit. Interacts with proteins S7 and S18. Binds to IF-3.

In terms of biological role, located on the platform of the 30S subunit, it bridges several disparate RNA helices of the 16S rRNA. Forms part of the Shine-Dalgarno cleft in the 70S ribosome. This is Small ribosomal subunit protein uS11 from Campylobacter curvus (strain 525.92).